Reading from the N-terminus, the 783-residue chain is FYN-binding protein 1 (783 aa).

Composition is skewed to polar residues over residues 1 to 18 and 25 to 45; these read MAKY…SVNS and GPNS…QGNA. The disordered stretch occupies residues 1–502; sequence MAKYNTGGNP…KEKKEQEIKK (502 aa). The residue at position 3 (Lys3) is an N6-acetyllysine. Phosphoserine occurs at positions 28 and 46. Positions 69–79 are enriched in basic and acidic residues; sequence SSEEKPDKEPK. Ser225 is modified (phosphoserine). 2 stretches are compositionally biased toward basic and acidic residues: residues 240–252 and 278–290; these read PARE…DHAG and NGEE…KIDA. Ser329 bears the Phosphoserine mark. Residues 345–363 show a composition bias toward pro residues; sequence KPLPPLFTLGPPPPKPNRP. Residues 348 to 448 are interaction with SKAP1; it reads PPLFTLGPPP…QDGVTHSDGA (101 aa). Residues 374-387 show a composition bias toward polar residues; it reads TSSGNSTSKGQTSY. The span at 392–424 shows a compositional bias: pro residues; it reads LPPPPPSHPASQPPLPASHPSQPPVPSLPPRNI. The span at 451 to 465 shows a compositional bias: acidic residues; the sequence is LDEEQDSEGETYEDI. A coiled-coil region spans residues 456 to 507; the sequence is DSEGETYEDIEASKEREKKREKEEKKRLELEKKEQKEKEKKEQEIKKKFKLT. The residue at position 457 (Ser457) is a Phosphoserine. An SH2-binding motif is present at residues 462 to 465; it reads YEDI. Residues 466–501 show a composition bias toward basic and acidic residues; sequence EASKEREKKREKEEKKRLELEKKEQKEKEKKEQEIK. The Nuclear localization signal signature appears at 469-505; the sequence is KEREKKREKEEKKRLELEKKEQKEKEKKEQEIKKKFK. Residues 511 to 572 enclose the SH3 1 domain; it reads QVIHLAKACC…KTTAVEIDYD (62 aa). Tyr571 carries the phosphotyrosine modification. Phosphoserine is present on residues Ser573 and Ser580. The SH2-binding; to LCP2 motif lies at 595 to 598; that stretch reads YDDV. The tract at residues 598–678 is disordered; sequence VAEQDDISSH…GTNVGKAKTE (81 aa). 2 stretches are compositionally biased toward acidic residues: residues 620-635 and 646-656; these read PDDD…DADD and MGDEVYDDVDT. An SH2-binding; to FYN motif is present at residues 625–628; the sequence is YDGI. Tyr651 is modified (phosphotyrosine). Positions 674–700 match the Nuclear localization signal motif; the sequence is KAKTEEKDLKKLKKQEKEEKDFRKKFK. The SH3 2 domain maps to 700-768; it reads KYDGEIRVLY…LRSYLADNDG (69 aa).

In terms of assembly, part of a complex consisting of SKAP2, FYB1 and PTPNS1. Part of a complex consisting of SKAP2, FYB1 and LILRB3. Part of a complex consisting of SKAP1, FYB1 and CLNK. Interacts with CLNK (via its SH2 domain); this interaction allows SKAP1 and FYB1 to recruit FYN to the complex, thus promoting the phosphorylation of CLNK by FYN. Interacts with FYN. Interacts with LCP2. Interacts with SKAP1. Interacts with SKAP2. Interacts with FASLG. Interacts with EVL. Interacts with TMEM47. Interacts with LCK. T-cell receptor ligation leads to increased tyrosine phosphorylation. As to expression, expressed in hematopoietic tissues such as myeloid and T-cells, spleen and thymus. Not expressed in B-cells, nor in non-lymphoid tissues.

The protein localises to the cytoplasm. The protein resides in the nucleus. It is found in the cell junction. Acts as an adapter protein of the FYN and LCP2 signaling cascades in T-cells. May play a role in linking T-cell signaling to remodeling of the actin cytoskeleton. Modulates the expression of IL2. Involved in platelet activation. Prevents the degradation of SKAP1 and SKAP2. May be involved in high affinity immunoglobulin epsilon receptor signaling in mast cells. This is FYN-binding protein 1 from Homo sapiens (Human).